Reading from the N-terminus, the 315-residue chain is Methionine import ATP-binding protein MetN (315 aa).

The 218-residue stretch at 2–219 (IEIEKVCVDF…PQHAFTQQLV (218 aa)) folds into the ABC transporter domain. Residue 16-23 (GTSGAGKS) coordinates ATP.

This sequence belongs to the ABC transporter superfamily. Methionine importer (TC 3.A.1.24) family. As to quaternary structure, the complex is composed of two ATP-binding proteins (MetN), two transmembrane proteins (MetI) and a solute-binding protein (MetQ).

Its subcellular location is the cell inner membrane. The catalysed reaction is L-methionine(out) + ATP + H2O = L-methionine(in) + ADP + phosphate + H(+). The enzyme catalyses D-methionine(out) + ATP + H2O = D-methionine(in) + ADP + phosphate + H(+). Its function is as follows. Part of the ABC transporter complex MetNIQ involved in methionine import. Responsible for energy coupling to the transport system. This Salmonella enteritidis protein is Methionine import ATP-binding protein MetN.